We begin with the raw amino-acid sequence, 793 residues long: Protein translocase subunit SecA 2 (793 aa).

ATP contacts are provided by residues Q77, 95-99 (GEGKT), and D493.

Belongs to the SecA family. As to quaternary structure, monomer and homodimer. Part of the essential Sec protein translocation apparatus which comprises SecA, SecYEG and auxiliary proteins SecDF. Other proteins may also be involved.

The protein localises to the cell membrane. It localises to the cytoplasm. The enzyme catalyses ATP + H2O + cellular proteinSide 1 = ADP + phosphate + cellular proteinSide 2.. Part of the Sec protein translocase complex. Interacts with the SecYEG preprotein conducting channel. Has a central role in coupling the hydrolysis of ATP to the transfer of proteins into and across the cell membrane, serving as an ATP-driven molecular motor driving the stepwise translocation of polypeptide chains across the membrane. This chain is Protein translocase subunit SecA 2, found in Streptococcus sanguinis (strain SK36).